Reading from the N-terminus, the 68-residue chain is MMNWDRIEGKWKQLKGQAQQQWGDLTDDDLDRVDGKREELVGVVQERYGLAKDEAEKQVQQFESSCNC.

The protein belongs to the UPF0337 (CsbD) family.

The polypeptide is UPF0337 protein RB10934 (Rhodopirellula baltica (strain DSM 10527 / NCIMB 13988 / SH1)).